Reading from the N-terminus, the 245-residue chain is 1-(5-phosphoribosyl)-5-[(5-phosphoribosylamino)methylideneamino] imidazole-4-carboxamide isomerase (245 aa).

Catalysis depends on D8, which acts as the Proton acceptor. The active-site Proton donor is the D130.

The protein belongs to the HisA/HisF family.

It is found in the cytoplasm. It catalyses the reaction 1-(5-phospho-beta-D-ribosyl)-5-[(5-phospho-beta-D-ribosylamino)methylideneamino]imidazole-4-carboxamide = 5-[(5-phospho-1-deoxy-D-ribulos-1-ylimino)methylamino]-1-(5-phospho-beta-D-ribosyl)imidazole-4-carboxamide. It functions in the pathway amino-acid biosynthesis; L-histidine biosynthesis; L-histidine from 5-phospho-alpha-D-ribose 1-diphosphate: step 4/9. The chain is 1-(5-phosphoribosyl)-5-[(5-phosphoribosylamino)methylideneamino] imidazole-4-carboxamide isomerase from Pseudomonas putida (strain W619).